The primary structure comprises 362 residues: Sulfate/thiosulfate import ATP-binding protein CysA (362 aa).

An ABC transporter domain is found at 13–243 (ITVRDAYKRY…PTNAFVMSFL (231 aa)). 45 to 52 (GPSGSGKS) lines the ATP pocket.

Belongs to the ABC transporter superfamily. Sulfate/tungstate importer (TC 3.A.1.6) family. In terms of assembly, the complex is composed of two ATP-binding proteins (CysA), two transmembrane proteins (CysT and CysW) and a solute-binding protein (CysP).

The protein localises to the cell membrane. The catalysed reaction is sulfate(out) + ATP + H2O = sulfate(in) + ADP + phosphate + H(+). It carries out the reaction thiosulfate(out) + ATP + H2O = thiosulfate(in) + ADP + phosphate + H(+). Part of the ABC transporter complex CysAWTP involved in sulfate/thiosulfate import. Responsible for energy coupling to the transport system. The chain is Sulfate/thiosulfate import ATP-binding protein CysA from Mycolicibacterium paratuberculosis (strain ATCC BAA-968 / K-10) (Mycobacterium paratuberculosis).